Consider the following 409-residue polypeptide: Serine hydroxymethyltransferase (409 aa).

(6S)-5,6,7,8-tetrahydrofolate is bound by residues Leu116 and 120–122 (GHL). Lys225 bears the N6-(pyridoxal phosphate)lysine mark.

Belongs to the SHMT family. In terms of assembly, homodimer. Pyridoxal 5'-phosphate serves as cofactor.

Its subcellular location is the cytoplasm. It carries out the reaction (6R)-5,10-methylene-5,6,7,8-tetrahydrofolate + glycine + H2O = (6S)-5,6,7,8-tetrahydrofolate + L-serine. Its pathway is one-carbon metabolism; tetrahydrofolate interconversion. The protein operates within amino-acid biosynthesis; glycine biosynthesis; glycine from L-serine: step 1/1. Its function is as follows. Catalyzes the reversible interconversion of serine and glycine with tetrahydrofolate (THF) serving as the one-carbon carrier. This reaction serves as the major source of one-carbon groups required for the biosynthesis of purines, thymidylate, methionine, and other important biomolecules. Also exhibits THF-independent aldolase activity toward beta-hydroxyamino acids, producing glycine and aldehydes, via a retro-aldol mechanism. The chain is Serine hydroxymethyltransferase from Acholeplasma laidlawii (strain PG-8A).